A 327-amino-acid polypeptide reads, in one-letter code: Phenylalanine--tRNA ligase alpha subunit (327 aa).

Position 252 (Glu-252) interacts with Mg(2+).

Belongs to the class-II aminoacyl-tRNA synthetase family. Phe-tRNA synthetase alpha subunit type 1 subfamily. In terms of assembly, tetramer of two alpha and two beta subunits. The cofactor is Mg(2+).

The protein localises to the cytoplasm. The catalysed reaction is tRNA(Phe) + L-phenylalanine + ATP = L-phenylalanyl-tRNA(Phe) + AMP + diphosphate + H(+). The polypeptide is Phenylalanine--tRNA ligase alpha subunit (Serratia proteamaculans (strain 568)).